Reading from the N-terminus, the 46-residue chain is Protein PsbN (46 aa).

The helical transmembrane segment at 7-27 (ALSVAIGVLAVLLGMTGFGVY) threads the bilayer.

It belongs to the PsbN family.

The protein resides in the cellular thylakoid membrane. In terms of biological role, may play a role in photosystem I and II biogenesis. The sequence is that of Protein PsbN from Parasynechococcus marenigrum (strain WH8102).